Reading from the N-terminus, the 503-residue chain is Aspartyl/glutamyl-tRNA(Asn/Gln) amidotransferase subunit B (503 aa).

This sequence belongs to the GatB/GatE family. GatB subfamily. As to quaternary structure, heterotrimer of A, B and C subunits.

It carries out the reaction L-glutamyl-tRNA(Gln) + L-glutamine + ATP + H2O = L-glutaminyl-tRNA(Gln) + L-glutamate + ADP + phosphate + H(+). It catalyses the reaction L-aspartyl-tRNA(Asn) + L-glutamine + ATP + H2O = L-asparaginyl-tRNA(Asn) + L-glutamate + ADP + phosphate + 2 H(+). Allows the formation of correctly charged Asn-tRNA(Asn) or Gln-tRNA(Gln) through the transamidation of misacylated Asp-tRNA(Asn) or Glu-tRNA(Gln) in organisms which lack either or both of asparaginyl-tRNA or glutaminyl-tRNA synthetases. The reaction takes place in the presence of glutamine and ATP through an activated phospho-Asp-tRNA(Asn) or phospho-Glu-tRNA(Gln). In Jannaschia sp. (strain CCS1), this protein is Aspartyl/glutamyl-tRNA(Asn/Gln) amidotransferase subunit B.